The chain runs to 437 residues: Trigger factor (437 aa).

The PPIase FKBP-type domain occupies 163 to 248 (GHMVTIDYAF…LNEIKRKELP (86 aa)).

Belongs to the FKBP-type PPIase family. Tig subfamily.

It is found in the cytoplasm. The catalysed reaction is [protein]-peptidylproline (omega=180) = [protein]-peptidylproline (omega=0). In terms of biological role, involved in protein export. Acts as a chaperone by maintaining the newly synthesized protein in an open conformation. Functions as a peptidyl-prolyl cis-trans isomerase. The polypeptide is Trigger factor (Pelobacter propionicus (strain DSM 2379 / NBRC 103807 / OttBd1)).